Reading from the N-terminus, the 87-residue chain is Protein OPG096 (87 aa).

2 helical membrane-spanning segments follow: residues proline 39–valine 59 and glutamine 67–leucine 87.

It belongs to the orthopoxvirus OPG096 family. As to quaternary structure, interacts with OPG158.

The protein localises to the virion membrane. It localises to the host cytoplasm. Its subcellular location is the host endoplasmic reticulum membrane. Early protein involved in virion morphogenesis. Participates in the formation and elongation of crescent-shaped membrane precursors of immature virions in cytoplasmic factories. The polypeptide is Protein OPG096 (OPG096) (Homo sapiens (Human)).